Reading from the N-terminus, the 574-residue chain is Proline--tRNA ligase (574 aa).

The protein belongs to the class-II aminoacyl-tRNA synthetase family. ProS type 1 subfamily. Homodimer.

It localises to the cytoplasm. The enzyme catalyses tRNA(Pro) + L-proline + ATP = L-prolyl-tRNA(Pro) + AMP + diphosphate. Its function is as follows. Catalyzes the attachment of proline to tRNA(Pro) in a two-step reaction: proline is first activated by ATP to form Pro-AMP and then transferred to the acceptor end of tRNA(Pro). As ProRS can inadvertently accommodate and process non-cognate amino acids such as alanine and cysteine, to avoid such errors it has two additional distinct editing activities against alanine. One activity is designated as 'pretransfer' editing and involves the tRNA(Pro)-independent hydrolysis of activated Ala-AMP. The other activity is designated 'posttransfer' editing and involves deacylation of mischarged Ala-tRNA(Pro). The misacylated Cys-tRNA(Pro) is not edited by ProRS. The chain is Proline--tRNA ligase from Fervidobacterium nodosum (strain ATCC 35602 / DSM 5306 / Rt17-B1).